The chain runs to 32 residues: Fibrinolytic enzyme 2 (32 aa).

Positions I1 to R32 constitute a Peptidase S8 domain. S5 serves as the catalytic Charge relay system.

This sequence belongs to the peptidase S8 family.

Inhibited by PMSF. Not inhibited by benzamidine, aprotinin, SBTI, EDTA, EGTA, 2-mercaptoethanol, iodoacetic acid or pepstatin A. Functionally, serine protease. Has fibrinolytic and fibrinogenolytic but no plasminogenolytic activity. Cleaves after Arg and Lys residues. Cleaves fibrinogen alpha chain, beta chain and gamma chain in that order. The polypeptide is Fibrinolytic enzyme 2 (Hediste japonica (Polychaete worm)).